A 206-amino-acid chain; its full sequence is 2,3-bisphosphoglycerate-dependent phosphoglycerate mutase (206 aa).

Substrate contacts are provided by residues 9 to 16, 22 to 23, R61, 88 to 91, K99, 115 to 116, and 159 to 160; these read RHGQSEWN, TG, ERNY, RR, and GN. The active-site Tele-phosphohistidine intermediate is H10. Catalysis depends on E88, which acts as the Proton donor/acceptor.

It belongs to the phosphoglycerate mutase family. BPG-dependent PGAM subfamily. Homodimer.

The catalysed reaction is (2R)-2-phosphoglycerate = (2R)-3-phosphoglycerate. It participates in carbohydrate degradation; glycolysis; pyruvate from D-glyceraldehyde 3-phosphate: step 3/5. Catalyzes the interconversion of 2-phosphoglycerate and 3-phosphoglycerate. This is 2,3-bisphosphoglycerate-dependent phosphoglycerate mutase from Bartonella henselae (strain ATCC 49882 / DSM 28221 / CCUG 30454 / Houston 1) (Rochalimaea henselae).